The primary structure comprises 284 residues: Bifunctional protein FolD (284 aa).

NADP(+) is bound by residues 165-167 (GRS) and S190.

The protein belongs to the tetrahydrofolate dehydrogenase/cyclohydrolase family. Homodimer.

The catalysed reaction is (6R)-5,10-methylene-5,6,7,8-tetrahydrofolate + NADP(+) = (6R)-5,10-methenyltetrahydrofolate + NADPH. It carries out the reaction (6R)-5,10-methenyltetrahydrofolate + H2O = (6R)-10-formyltetrahydrofolate + H(+). Its pathway is one-carbon metabolism; tetrahydrofolate interconversion. Functionally, catalyzes the oxidation of 5,10-methylenetetrahydrofolate to 5,10-methenyltetrahydrofolate and then the hydrolysis of 5,10-methenyltetrahydrofolate to 10-formyltetrahydrofolate. This Streptococcus agalactiae serotype Ia (strain ATCC 27591 / A909 / CDC SS700) protein is Bifunctional protein FolD.